The following is a 153-amino-acid chain: 6,7-dimethyl-8-ribityllumazine synthase (153 aa).

Residues Phe-21, 55–57, and 79–81 contribute to the 5-amino-6-(D-ribitylamino)uracil site; these read AFE and TVI. 84 to 85 provides a ligand contact to (2S)-2-hydroxy-3-oxobutyl phosphate; it reads AT. Residue His-87 is the Proton donor of the active site. Phe-112 lines the 5-amino-6-(D-ribitylamino)uracil pocket. Arg-126 serves as a coordination point for (2S)-2-hydroxy-3-oxobutyl phosphate.

This sequence belongs to the DMRL synthase family. Forms an icosahedral capsid composed of 60 subunits, arranged as a dodecamer of pentamers.

The enzyme catalyses (2S)-2-hydroxy-3-oxobutyl phosphate + 5-amino-6-(D-ribitylamino)uracil = 6,7-dimethyl-8-(1-D-ribityl)lumazine + phosphate + 2 H2O + H(+). It participates in cofactor biosynthesis; riboflavin biosynthesis; riboflavin from 2-hydroxy-3-oxobutyl phosphate and 5-amino-6-(D-ribitylamino)uracil: step 1/2. In terms of biological role, catalyzes the formation of 6,7-dimethyl-8-ribityllumazine by condensation of 5-amino-6-(D-ribitylamino)uracil with 3,4-dihydroxy-2-butanone 4-phosphate. This is the penultimate step in the biosynthesis of riboflavin. The chain is 6,7-dimethyl-8-ribityllumazine synthase from Bacillus cereus (strain B4264).